A 752-amino-acid chain; its full sequence is Photosystem I P700 chlorophyll a apoprotein A1 (752 aa).

8 consecutive transmembrane segments (helical) span residues 73–96 (IFSAHFGQLAIIFLWVSQAYFHGA), 159–182 (LYWTAMGGLMMSALMVFAGWFHYH), 198–222 (MNHHLAGLLGLGCLSWSGHQIHISL), 294–312 (TAHHHLALAVLFIFAGHMY), 349–372 (WHAQLAINLAMMGSLSIIVAHHMY), 388–414 (LSLFTHHMWIGGFCVCGAAAHGAIFMV), 436–458 (AIISHLNWVCIFLGTHSFGLYIH), and 533–551 (FLVHHIHAFTIHVTVLILL). [4Fe-4S] cluster contacts are provided by cysteine 575 and cysteine 584. 2 consecutive transmembrane segments (helical) span residues 591–612 (HIFLGLFWMYNCISVVIFHFSW) and 666–688 (LSAYGIIFLGAHFIWAFSLMFLF). A chlorophyll a'-binding site is contributed by histidine 677. Positions 685 and 693 each coordinate chlorophyll a. Tryptophan 694 provides a ligand contact to phylloquinone. Residues 726-746 (AVGLAHYLLGGIGTTWSFFLA) traverse the membrane as a helical segment.

Belongs to the PsaA/PsaB family. The PsaA/B heterodimer binds the P700 chlorophyll special pair and subsequent electron acceptors. PSI consists of a core antenna complex that captures photons, and an electron transfer chain that converts photonic excitation into a charge separation. The eukaryotic PSI reaction center is composed of at least 11 subunits. It depends on P700 is a chlorophyll a/chlorophyll a' dimer, A0 is one or more chlorophyll a, A1 is one or both phylloquinones and FX is a shared 4Fe-4S iron-sulfur center. as a cofactor.

The protein localises to the plastid. It is found in the chloroplast thylakoid membrane. It carries out the reaction reduced [plastocyanin] + hnu + oxidized [2Fe-2S]-[ferredoxin] = oxidized [plastocyanin] + reduced [2Fe-2S]-[ferredoxin]. Functionally, psaA and PsaB bind P700, the primary electron donor of photosystem I (PSI), as well as the electron acceptors A0, A1 and FX. PSI is a plastocyanin/cytochrome c6-ferredoxin oxidoreductase, converting photonic excitation into a charge separation, which transfers an electron from the donor P700 chlorophyll pair to the spectroscopically characterized acceptors A0, A1, FX, FA and FB in turn. Oxidized P700 is reduced on the lumenal side of the thylakoid membrane by plastocyanin or cytochrome c6. The sequence is that of Photosystem I P700 chlorophyll a apoprotein A1 from Emiliania huxleyi (Coccolithophore).